Here is a 117-residue protein sequence, read N- to C-terminus: MKKIGVAGLQREQIKKTIEATAPGCFEVFIHNDMEAAMKVKSGQLDYYIGACNTGAGAALSIAIAVIGYNKSCTIAKPGIKAKDEHIAKMIAEGKVAFGLSVEHVEHAIPMLINHLK.

This is an uncharacterized protein from Escherichia coli O6:H1 (strain CFT073 / ATCC 700928 / UPEC).